A 509-amino-acid chain; its full sequence is MFS antiporter QDR1 (509 aa).

The Cytoplasmic portion of the chain corresponds to 1-41; the sequence is MPGNREEFDIEKVLKSKKLEAIETSTEKKAPYTVFESTDKL. The chain crosses the membrane as a helical span at residues 42–62; sequence LLIIVLSLVGFWSAISSPIYF. Residues 63–75 lie on the Extracellular side of the membrane; sequence PALPTLTKYFNTT. A helical transmembrane segment spans residues 76–96; the sequence is PSVMNISVVAYLIFQGIAPTI. The Cytoplasmic portion of the chain corresponds to 97 to 106; sequence SSNLADTFGR. Residues 107-129 traverse the membrane as a helical segment; it reads RPVILGSIIVFCAVCIAISQTNV. Over 130–132 the chain is Extracellular; the sequence is YWL. A helical transmembrane segment spans residues 133–155; sequence LALLRCFQAAGIAPVFAISSGVA. Residues 156–169 are Cytoplasmic-facing; the sequence is GDICTPANRGGMVG. The helical transmembrane segment at 170–190 threads the bilayer; that stretch reads AVSGLQLAGNGIGGLVGAALI. Topologically, residues 191-197 are extracellular; sequence SGFHTWR. Residues 198 to 218 form a helical membrane-spanning segment; sequence AIFIFLAIGGGVTFIFAFLVL. Topologically, residues 219–278 are cytoplasmic; that stretch reads AETSRRIVGNGSIRPKNVLNKAVLIYLPHFKNKITNDYSTLQPKGPFDILGPFKIFFQKE. A helical transmembrane segment spans residues 279 to 299; the sequence is VFCTLLPSGMHFAAWTVSLTS. Over 300-312 the chain is Extracellular; sequence LSTELESAKYNYS. Residues 313-333 traverse the membrane as a helical segment; sequence VMKVGLVYLPQGIACFIGSLI. The Cytoplasmic portion of the chain corresponds to 334–370; it reads AGRCLNWYYRYRKNLYDKQMNDVPLNDRPPFNLVASR. A helical membrane pass occupies residues 371–391; the sequence is LTLTIVPLAMMVIGLSAFGWC. Residues 392–397 are Extracellular-facing; that stretch reads LEYKKP. Residues 398–418 traverse the membrane as a helical segment; that stretch reads IISIIISTILISFSASVMMSI. Residues 419–432 lie on the Cytoplasmic side of the membrane; the sequence is CTTMLVDLYPKQSG. The chain crosses the membrane as a helical span at residues 433–453; it reads ASASCVNLMRCWLAALFTGVL. At 454–455 the chain is on the extracellular side; that stretch reads DK. The helical transmembrane segment at 456-476 threads the bilayer; it reads IISALGLGGTYTLLTGICLLT. Over 477-509 the chain is Cytoplasmic; that stretch reads DLGLVYVLYTANQRFVNYVSPNQTAVNSDAEDY.

This sequence belongs to the major facilitator superfamily. CAR1 family.

The protein localises to the cell membrane. Functionally, MFS antiporter that does not display functional linkage as drug transporter and performs functions that significantly affect biofilm development and virulence. No substrate for transport has been identified yet, but plays an important role in the growth in the host. This Candida albicans (strain SC5314 / ATCC MYA-2876) (Yeast) protein is MFS antiporter QDR1 (QDR).